Consider the following 386-residue polypeptide: Lysophosphatidylserine lipase ABHD12 (386 aa).

At 1–66 (MRKRAEPVPP…YGLWSRLRMF (66 aa)) the chain is on the cytoplasmic side. A helical membrane pass occupies residues 67-87 (LIFLLGLYIAIPFLVKICPAI). At 88 to 386 (QTQLVFLNLV…RDFLGNTEQQ (299 aa)) the chain is on the extracellular side. N-linked (GlcNAc...) asparagine glycosylation occurs at N114. S237 (nucleophile) is an active-site residue. Residues D324 and H363 each act as charge relay system in the active site.

This sequence belongs to the serine esterase family.

The protein resides in the endoplasmic reticulum membrane. It catalyses the reaction 1-(9Z-octadecenoyl)-sn-glycero-3-phospho-L-serine + H2O = sn-glycero-3-phospho-L-serine + (9Z)-octadecenoate + H(+). The enzyme catalyses 1-(9Z-octadecenoyl)-sn-glycero-3-phospho-(1'-sn-glycerol) + H2O = sn-glycero-3-phospho-(1'-sn-glycerol) + (9Z)-octadecenoate + H(+). It carries out the reaction 1-(9Z-octadecenoyl)-sn-glycero-3-phospho-(1D-myo-inositol) + H2O = sn-glycero-3-phospho-1D-myo-inositol + (9Z)-octadecenoate + H(+). The catalysed reaction is 1-(9Z-octadecenoyl)-sn-glycero-3-phosphoethanolamine + H2O = sn-glycero-3-phosphoethanolamine + (9Z)-octadecenoate + H(+). It catalyses the reaction 1-(9Z-octadecenoyl)-sn-glycero-3-phosphocholine + H2O = 1-(9Z-octadecenoyl)-sn-glycerol + phosphocholine + H(+). The enzyme catalyses 2-(9Z-octadecenoyl)-glycerol + H2O = glycerol + (9Z)-octadecenoate + H(+). It carries out the reaction 1-hexadecanoyl-sn-glycero-3-phospho-L-serine + H2O = sn-glycero-3-phospho-L-serine + hexadecanoate + H(+). The catalysed reaction is 2-(5Z,8Z,11Z,14Z-eicosatetraenoyl)-glycerol + H2O = glycerol + (5Z,8Z,11Z,14Z)-eicosatetraenoate + H(+). It catalyses the reaction Hydrolyzes glycerol monoesters of long-chain fatty acids.. The enzyme catalyses 1-decanoylglycerol + H2O = decanoate + glycerol + H(+). It carries out the reaction 1-dodecanoylglycerol + H2O = dodecanoate + glycerol + H(+). The catalysed reaction is 1-tetradecanoylglycerol + H2O = tetradecanoate + glycerol + H(+). It catalyses the reaction 2-hexadecanoylglycerol + H2O = glycerol + hexadecanoate + H(+). The enzyme catalyses 1-(9Z-octadecenoyl)-glycerol + H2O = glycerol + (9Z)-octadecenoate + H(+). It carries out the reaction 2-(9Z,12Z-octadecadienoyl)-glycerol + H2O = (9Z,12Z)-octadecadienoate + glycerol + H(+). The catalysed reaction is 1-(5Z,8Z,11Z,14Z-eicosatetraenoyl)-glycerol + H2O = glycerol + (5Z,8Z,11Z,14Z)-eicosatetraenoate + H(+). It catalyses the reaction 1-(9Z,12Z-octadecadienoyl)-glycerol + H2O = (9Z,12Z)-octadecadienoate + glycerol + H(+). The enzyme catalyses 1-hexadecanoylglycerol + H2O = glycerol + hexadecanoate + H(+). It carries out the reaction 1-octadecanoylglycerol + H2O = octadecanoate + glycerol + H(+). The catalysed reaction is 1-octadecanoyl-2-(9,10-epoxyoctadecanoyl)-sn-glycero-3-phospho-L-serine + H2O = 9,10-epoxyoctadecanoate + 1-octadecanoyl-sn-glycero-3-phosphoserine + H(+). It catalyses the reaction 1-octadecanoyl-2-(10-hydroxyoctadecanoyl)-sn-glycero-3-phospho-L-serine + H2O = 1-octadecanoyl-sn-glycero-3-phosphoserine + 10-hydroxyoctadecanoate + H(+). The enzyme catalyses 1-hexadecanoyl-2-(10-hydroxyoctadecanoyl)-sn-glycero-3-phospho-L-serine + H2O = 10-hydroxyoctadecanoate + 1-hexadecanoyl-sn-glycero-3-phospho-L-serine + H(+). Its function is as follows. Lysophosphatidylserine (LPS) lipase that mediates the hydrolysis of lysophosphatidylserine, a class of signaling lipids that regulates immunological and neurological processes. Represents a major lysophosphatidylserine lipase in the brain, thereby playing a key role in the central nervous system. Also able to hydrolyze oxidized phosphatidylserine; oxidized phosphatidylserine is produced in response to severe inflammatory stress and constitutes a proapoptotic 'eat me' signal. Also has monoacylglycerol (MAG) lipase activity: hydrolyzes 2-arachidonoylglycerol (2-AG), thereby acting as a regulator of endocannabinoid signaling pathways. Has a strong preference for very-long-chain lipid substrates; substrate specificity is likely due to improved catalysis and not improved substrate binding. The chain is Lysophosphatidylserine lipase ABHD12 from Xenopus tropicalis (Western clawed frog).